Here is a 147-residue protein sequence, read N- to C-terminus: Globin, major polymeric component P1 (147 aa).

Residues 2 to 146 (HLTADQVAAL…ISDACIAGLQ (145 aa)) enclose the Globin domain. Histidine 96 is a heme b binding site.

Belongs to the globin family. As to quaternary structure, polymer.

The sequence is that of Globin, major polymeric component P1 from Glycera dibranchiata (Bloodworm).